The following is a 125-amino-acid chain: Temptin (125 aa).

Positions 1-22 (MEQKRTLRVFLAVSLLCALANA) are cleaved as a signal peptide. Disulfide bonds link Cys-40-Cys-125 and Cys-79-Cys-99. Residues 78–125 (LCDMDSDGDGRSNGVELGDPECVWSQGETPARTTDLSHPGFDEATVSC) form a disordered region. The span at 103–113 (QGETPARTTDL) shows a compositional bias: polar residues.

As to quaternary structure, binds to attractin and enticin. Produced by the albumen gland of the egg cordons.

It is found in the secreted. In terms of biological role, a component of the complex of water-borne protein pheromones that stimulates attraction and mating behavior. Modulates pheromone signaling by direct binding to attractin. This chain is Temptin, found in Aplysia californica (California sea hare).